The chain runs to 461 residues: MEDELYLENIDEFVTDQNRIVTYKWLSYTLGVHVNQAKQMLYDYVERKRKENSGAQLHVTYLVAGNLIQNGHTCHKVAVVREDKLEAMKSKLATVTSVHVYSIQKALLKDSGPLYNTDYDIIKANLHNCSKFSAIRCADAVPRTPAEVAQARTLARSSSQTPSDTSAVSTPPLNGHGPTAAKQSSQPPKGIMGMFAAKAASKAQDANKEPKAKEAPSVSAASSKPSAKGNIMNNFFGKAAMNKLKVNSVPGQPKEEKEAVKTSVPATEPESSPNTIVEKPGRKTEPAKIQQKDKKSKMKRMDKSDNEEEREPENQKKKRKRIKQLESDSSDEEDVLASPTLEEEKAPSPPPLVPALKAELEPASTEASAGGKKRKRKRVLKSKMFVDEEEGCMVTEKVYESESCTDSEDDFAKTKPPAVPKQPALPVKKEPKEERKNQKKGAATASRANKQISIMGFCQKK.

Disordered regions lie at residues 148–229 (VAQA…SAKG), 249–380 (VPGQ…KRVL), and 399–461 (YESE…CQKK). Residues 155 to 172 (ARSSSQTPSDTSAVSTPP) show a composition bias toward polar residues. Basic and acidic residues predominate over residues 205–214 (DANKEPKAKE). Residues 215 to 228 (APSVSAASSKPSAK) show a composition bias toward low complexity. Over residues 279–304 (KPGRKTEPAKIQQKDKKSKMKRMDKS) the composition is skewed to basic and acidic residues. Residues 371-380 (GKKRKRKRVL) show a composition bias toward basic residues. Residues 427–436 (VKKEPKEERK) show a composition bias toward basic and acidic residues. The short motif at 451-458 (QISIMGFC) is the PIP-box element.

As to quaternary structure, component of both the DNA polymerase delta and DNA polymerase zeta complexes. The tetrameric DNA polymerase delta complex (Pol-delta4), which consists of POLD1/p125, POLD2/p50, POLD3/p66/p68 and POLD4/p12, with POLD1 bearing DNA polymerase and 3' to 5' proofreading exonuclease activities.

The protein resides in the cytoplasm. Its subcellular location is the nucleus. In terms of biological role, accessory component of both the DNA polymerase delta complex and the DNA polymerase zeta complex. As a component of the trimeric and tetrameric DNA polymerase delta complexes (Pol-delta3 and Pol-delta4, respectively), plays a role in high fidelity genome replication, including in lagging strand synthesis, and repair. Required for optimal Pol-delta activity. Stabilizes the Pol-delta complex and plays a major role in Pol-delta stimulation by PCNA. Pol-delta3 and Pol-delta4 are characterized by the absence or the presence of POLD4. They exhibit differences in catalytic activity. Most notably, Pol-delta3 shows higher proofreading activity than Pol-delta4. Although both Pol-delta3 and Pol-delta4 process Okazaki fragments in vitro, Pol-delta3 may also be better suited to fulfill this task, exhibiting near-absence of strand displacement activity compared to Pol-delta4 and stalling on encounter with the 5'-blocking oligonucleotides. Pol-delta3 idling process may avoid the formation of a gap, while maintaining a nick that can be readily ligated. Along with DNA polymerase kappa, DNA polymerase delta carries out approximately half of nucleotide excision repair (NER) synthesis following UV irradiation. In this context, POLD3, along with PCNA and RFC1-replication factor C complex, is required to recruit POLD1, the catalytic subunit of the polymerase delta complex, to DNA damage sites. Under conditions of DNA replication stress, required for the repair of broken replication forks through break-induced replication (BIR). Involved in the translesion synthesis (TLS) of templates carrying O6-methylguanine or abasic sites performed by Pol-delta4, independently of DNA polymerase zeta (REV3L) or eta (POLH). Facilitates abasic site bypass by DNA polymerase delta by promoting extension from the nucleotide inserted opposite the lesion. Also involved in TLS, as a component of the tetrameric DNA polymerase zeta complex. Along with POLD2, dramatically increases the efficiency and processivity of DNA synthesis of the DNA polymerase zeta complex compared to the minimal zeta complex, consisting of only REV3L and REV7. The protein is DNA polymerase delta subunit 3 (POLD3) of Gallus gallus (Chicken).